Here is a 497-residue protein sequence, read N- to C-terminus: PHD finger protein 10 (497 aa).

Positions 1–61 (MAAAGPGAAL…SSRSCETSSQ (61 aa)) are disordered. A phosphoserine mark is found at Ser11, Ser35, and Ser49. The tract at residues 88-184 (MLQEQVSEYL…HYKEYSQMQQ (97 aa)) is essential to induce neural progenitor proliferation. Positions 88 to 294 (MLQEQVSEYL…PPLDPELPAL (207 aa)) are SAY. Residue Lys240 forms a Glycyl lysine isopeptide (Lys-Gly) (interchain with G-Cter in SUMO2) linkage. At Ser269 the chain carries Phosphoserine. Low complexity predominate over residues 284-295 (EPPLDPELPALD). The tract at residues 284–367 (EPPLDPELPA…KRSVLSKSVP (84 aa)) is disordered. The interval 291–333 (LPALDSDGDSDDGEDGGGDEKRKNKGTSDSSSGNVSEGDSPPD) is essential to induce neural progenitor proliferation. 4 positions are modified to phosphoserine: Ser296, Ser300, Ser326, and Ser330. Over residues 296 to 307 (SDGDSDDGEDGG) the composition is skewed to acidic residues. Over residues 317 to 327 (TSDSSSGNVSE) the composition is skewed to polar residues. A compositionally biased stretch (basic and acidic residues) spans 344 to 358 (KSKDKMATPRKDGSK). A PHD-type 1; degenerate zinc finger spans residues 378 to 435 (LCGICLKGKESNKKGKAESLIHCSQCDNSGHPSCLDMTMELVSMIKTYPWQCMECKTC). Lys384 participates in a covalent cross-link: Glycyl lysine isopeptide (Lys-Gly) (interchain with G-Cter in SUMO2). The PHD-type 2; degenerate zinc-finger motif lies at 437–480 (ICGQPHHEEEMMFCDVCDRGYHTFCVGLGAIPSGRWICDCCQRA).

The protein belongs to the SAYP family. In terms of assembly, component of neural progenitors-specific chromatin remodeling complex (npBAF complex) composed of at least, ARID1A/BAF250A or ARID1B/BAF250B, SMARCD1/BAF60A, SMARCD3/BAF60C, SMARCA2/BRM/BAF190B, SMARCA4/BRG1/BAF190A, SMARCB1/BAF47, SMARCC1/BAF155, SMARCE1/BAF57, SMARCC2/BAF170, PHF10/BAF45A, ACTL6A/BAF53A and actin. Interacts with ACTL6A/BAF53A, SMARCA2/BRM/BAF190B, SMARCA4/BRG1/BAF190A and PBRM1/BAF180.

The protein resides in the nucleus. Involved in transcription activity regulation by chromatin remodeling. Belongs to the neural progenitors-specific chromatin remodeling complex (npBAF complex) and is required for the proliferation of neural progenitors. During neural development a switch from a stem/progenitor to a post-mitotic chromatin remodeling mechanism occurs as neurons exit the cell cycle and become committed to their adult state. The transition from proliferating neural stem/progenitor cells to post-mitotic neurons requires a switch in subunit composition of the npBAF and nBAF complexes. As neural progenitors exit mitosis and differentiate into neurons, npBAF complexes which contain ACTL6A/BAF53A and PHF10/BAF45A, are exchanged for homologous alternative ACTL6B/BAF53B and DPF1/BAF45B or DPF3/BAF45C subunits in neuron-specific complexes (nBAF). The npBAF complex is essential for the self-renewal/proliferative capacity of the multipotent neural stem cells. The nBAF complex along with CREST plays a role regulating the activity of genes essential for dendrite growth. The chain is PHD finger protein 10 (Phf10) from Rattus norvegicus (Rat).